Consider the following 203-residue polypeptide: MSSKLRVGVAGPVGSGKTALVETLCLSMNKNYEIAVVTNDIYTKEDANFLINKKVLEEGRIIGVETGGCPHTAIREDCSLNKNAVLDLENKYNPLDFVFVESGGDNLASSFSPELVDLSIYVIDVSAGDKIPRKGGPGITRSDLLLINKIDLADKVGADLNIMKSDTEFMRKGKPWFFTNLSSGMGVEEIIQFLESHIPNNRN.

Position 11–18 (11–18) interacts with GTP; the sequence is GPVGSGKT.

Belongs to the SIMIBI class G3E GTPase family. UreG subfamily. As to quaternary structure, homodimer. UreD, UreF and UreG form a complex that acts as a GTP-hydrolysis-dependent molecular chaperone, activating the urease apoprotein by helping to assemble the nickel containing metallocenter of UreC. The UreE protein probably delivers the nickel.

It is found in the cytoplasm. In terms of biological role, facilitates the functional incorporation of the urease nickel metallocenter. This process requires GTP hydrolysis, probably effectuated by UreG. This Prochlorococcus marinus (strain AS9601) protein is Urease accessory protein UreG.